A 412-amino-acid polypeptide reads, in one-letter code: Translation initiation factor 2 subunit gamma (412 aa).

In terms of domain architecture, tr-type G spans 8–205; that stretch reads QAEMNIGMVG…AMYEHFEPPE (198 aa). A G1 region spans residues 17 to 24; sequence GHVDHGKT. Asp20, Thr24, Gly45, and Ser47 together coordinate Mg(2+). 20–25 serves as a coordination point for GTP; the sequence is DHGKTT. The tract at residues 45–49 is G2; sequence GISIR. Zn(2+) contacts are provided by Cys60, Cys63, Cys72, and Cys75. A G3 region spans residues 89–92; it reads DSPG. Residues 145-148 and 183-185 each bind GTP; these read NKID and SAQ. A G4 region spans residues 145–148; it reads NKID. The tract at residues 183–185 is G5; the sequence is SAQ.

This sequence belongs to the TRAFAC class translation factor GTPase superfamily. Classic translation factor GTPase family. EIF2G subfamily. Heterotrimer composed of an alpha, a beta and a gamma chain. Mg(2+) serves as cofactor.

The enzyme catalyses GTP + H2O = GDP + phosphate + H(+). Functionally, eIF-2 functions in the early steps of protein synthesis by forming a ternary complex with GTP and initiator tRNA. In Methanopyrus kandleri (strain AV19 / DSM 6324 / JCM 9639 / NBRC 100938), this protein is Translation initiation factor 2 subunit gamma.